A 622-amino-acid chain; its full sequence is Sodium/potassium/calcium exchanger 4 (622 aa).

A signal peptide spans 1 to 38; it reads MALRGLIRQSKVRRRREMLPQQVGFVCAVLALVCCASG. Residues 39-97 are Extracellular-facing; that stretch reads LFGSLGHKTASAGKHVLLDTWRNRKLMAPINGTPLAKNCTDPAIHEFPTDLFSNKERQH. N-linked (GlcNAc...) asparagine glycosylation occurs at N76. The chain crosses the membrane as a helical span at residues 98 to 118; sequence GAVLLHILGALYMFYALAIVC. Topologically, residues 119–142 are cytoplasmic; that stretch reads DDFFVPSLEKICEKLHLSEDVAGA. The Alpha-1 repeat unit spans residues 139 to 179; the sequence is VAGATFMAAGSSTPELFASVIGVFITHGDVGVGTIVGSAVF. Residues 143 to 163 traverse the membrane as a helical segment; that stretch reads TFMAAGSSTPELFASVIGVFI. Residues 164–172 lie on the Extracellular side of the membrane; the sequence is THGDVGVGT. The helical transmembrane segment at 173 to 193 threads the bilayer; sequence IVGSAVFNILCIIGVCGLFAG. Residues 194-200 lie on the Cytoplasmic side of the membrane; sequence QVVRLTW. A helical membrane pass occupies residues 201-221; sequence WAVCRDSVYYTLSVIVLIAFI. Topologically, residues 222–224 are extracellular; that stretch reads YDE. The helical transmembrane segment at 225–245 threads the bilayer; it reads EIVWWEGLVLIILYVFYILIM. Residues 246–457 lie on the Cytoplasmic side of the membrane; the sequence is KYNMKMQTFF…RWEKFFMVTF (212 aa). Residues 358 to 408 form a disordered region; sequence ANGVNSKPLQNGRHENMENGNVPVENPEDPQQGQEQQPPPQPPPPEPESVE. The span at 394–404 shows a compositional bias: pro residues; that stretch reads QPPPQPPPPEP. A helical transmembrane segment spans residues 458 to 478; that stretch reads ITATLWIAVFSYLMVWLVTII. A topological domain (extracellular) is located at residue G479. Residues 480-500 traverse the membrane as a helical segment; the sequence is YTLGIPDVIMGITFLAAGTSV. The stretch at 495–526 is one Alpha-2 repeat; that stretch reads AAGTSVPDCMASLIVARQGLGDMAVSNTIGSN. Over 501–526 the chain is Cytoplasmic; the sequence is PDCMASLIVARQGLGDMAVSNTIGSN. The helical transmembrane segment at 527–547 threads the bilayer; it reads VFDILVGLGIPWGLQTMVINY. Topologically, residues 548-557 are extracellular; the sequence is GSTVKINSRG. A helical membrane pass occupies residues 558–578; it reads LVYSVVLLLGSVALTVLGIHL. Over 579 to 586 the chain is Cytoplasmic; it reads NKWRLDRK. Residues 587 to 607 traverse the membrane as a helical segment; that stretch reads LGIYVLVLYAVFLCFSIMIEF. The Extracellular segment spans residues 608-622; sequence NVFTFVNLPMCREDD.

Belongs to the Ca(2+):cation antiporter (CaCA) (TC 2.A.19) family. SLC24A subfamily. As to expression, expressed in late secretory-stage and maturation-stage ameloblasts, with significantly increased expression during the late stages of amelogenesis (at protein level). Widely expressed in most regions of the brain, including hippocampus, neocortex, thalamus, striatum and olfactory bulb. Expressed in the olfactory sensory neurons.

Its subcellular location is the cell membrane. The protein localises to the cytoplasm. The enzyme catalyses Ca(2+)(out) + K(+)(out) + 4 Na(+)(in) = Ca(2+)(in) + K(+)(in) + 4 Na(+)(out). Its function is as follows. Calcium, potassium:sodium antiporter that transports 1 Ca(2+) and 1 K(+) in exchange for 4 Na(+). Controls the rapid response termination and proper regulation of adaptation in olfactory sensory neurons (OSNs) which subsequently influences how odor information is encoded and perceived. May play a role in calcium transport during amelogenesis. This is Sodium/potassium/calcium exchanger 4 from Mus musculus (Mouse).